A 408-amino-acid polypeptide reads, in one-letter code: Serine/threonine transporter SstT (408 aa).

Transmembrane regions (helical) follow at residues 11 to 31 (LANG…VALA), 43 to 63 (FLGS…VFIL), 82 to 102 (IVVL…ILSM), 141 to 161 (ALMT…GLAL), 192 to 212 (IGIF…AIAG), 216 to 236 (LLAV…PLIV), 290 to 310 (IPLG…VLTL), 316 to 336 (LGIQ…AISA), and 363 to 383 (VAMQ…AAET).

This sequence belongs to the dicarboxylate/amino acid:cation symporter (DAACS) (TC 2.A.23) family.

It localises to the cell inner membrane. It carries out the reaction L-serine(in) + Na(+)(in) = L-serine(out) + Na(+)(out). The enzyme catalyses L-threonine(in) + Na(+)(in) = L-threonine(out) + Na(+)(out). Functionally, involved in the import of serine and threonine into the cell, with the concomitant import of sodium (symport system). In Shewanella oneidensis (strain ATCC 700550 / JCM 31522 / CIP 106686 / LMG 19005 / NCIMB 14063 / MR-1), this protein is Serine/threonine transporter SstT.